A 477-amino-acid polypeptide reads, in one-letter code: Cysteine--tRNA ligase (477 aa).

C28 provides a ligand contact to Zn(2+). The 'HIGH' region signature appears at 30–40; that stretch reads PTVYDYAHIGN. Residues C213, H238, and E242 each coordinate Zn(2+). Residues 270–274 carry the 'KMSKS' region motif; the sequence is KMSKS. K273 provides a ligand contact to ATP.

This sequence belongs to the class-I aminoacyl-tRNA synthetase family. As to quaternary structure, monomer. Requires Zn(2+) as cofactor.

It is found in the cytoplasm. It carries out the reaction tRNA(Cys) + L-cysteine + ATP = L-cysteinyl-tRNA(Cys) + AMP + diphosphate. In Chlamydia trachomatis serovar D (strain ATCC VR-885 / DSM 19411 / UW-3/Cx), this protein is Cysteine--tRNA ligase (cysS).